The following is a 1092-amino-acid chain: Neural cell adhesion molecule 1-B (1092 aa).

The N-terminal stretch at Met-1–Ala-19 is a signal peptide. 5 consecutive Ig-like C2-type domains span residues Leu-20 to Asn-108, Gln-113 to Gln-202, Pro-208 to Val-295, Pro-303 to Gln-397, and Pro-400 to Val-489. Residues Leu-20–Thr-705 lie on the Extracellular side of the membrane. Cystine bridges form between Cys-41–Cys-93 and Cys-136–Cys-186. Asn-82 is a glycosylation site (N-linked (GlcNAc...) asparagine). Heparin contacts are provided by residues Arg-149–Lys-153 and Lys-158–Arg-162. A glycan (N-linked (GlcNAc...) asparagine) is linked at Asn-219. A disulfide bridge connects residues Cys-232 and Cys-282. Asn-310, Asn-341, Asn-417, Asn-443, and Asn-472 each carry an N-linked (GlcNAc...) asparagine glycan. A disulfide bridge connects residues Cys-323 and Cys-379. Cys-420 and Cys-473 form a disulfide bridge. Fibronectin type-III domains are found at residues Thr-493 to Val-592 and Glu-595 to Pro-691. Residues Gly-706 to Val-723 traverse the membrane as a helical segment. The Cytoplasmic segment spans residues Asp-724–Ala-1092. Over residues Lys-754–Asn-784 the composition is skewed to basic and acidic residues. Disordered stretches follow at residues Lys-754 to Phe-1005 and Thr-1024 to Ala-1092. Composition is skewed to low complexity over residues Thr-820–Thr-832 and Ser-839–Thr-851. Residues Asp-860 to Pro-871 are compositionally biased toward polar residues. Residues Pro-917 to Ala-929 are compositionally biased toward low complexity. Polar residues predominate over residues Ala-968–Glu-978. Basic and acidic residues predominate over residues Ala-1050–Val-1068. Polar residues predominate over residues Asn-1080 to Ala-1092.

Post-translationally, polysialylated by ST8SIA2 and ST8SIA4. Polysialylation modulates cell interactions by confering both attractive and repulsive properties that are highly regulated by ST8SIA2 and ST8SIA4. Polysialylation is formed on a-2,3-linked sialic acid of core glycans.

Its subcellular location is the cell membrane. Its function is as follows. This protein is a cell adhesion molecule involved in neuron-neuron adhesion, neurite fasciculation, outgrowth of neurites, etc. The protein is Neural cell adhesion molecule 1-B of Xenopus laevis (African clawed frog).